Here is a 239-residue protein sequence, read N- to C-terminus: 2-C-methyl-D-erythritol 4-phosphate cytidylyltransferase (239 aa).

Belongs to the IspD/TarI cytidylyltransferase family. IspD subfamily.

It carries out the reaction 2-C-methyl-D-erythritol 4-phosphate + CTP + H(+) = 4-CDP-2-C-methyl-D-erythritol + diphosphate. It functions in the pathway isoprenoid biosynthesis; isopentenyl diphosphate biosynthesis via DXP pathway; isopentenyl diphosphate from 1-deoxy-D-xylulose 5-phosphate: step 2/6. In terms of biological role, catalyzes the formation of 4-diphosphocytidyl-2-C-methyl-D-erythritol from CTP and 2-C-methyl-D-erythritol 4-phosphate (MEP). The chain is 2-C-methyl-D-erythritol 4-phosphate cytidylyltransferase from Acinetobacter baylyi (strain ATCC 33305 / BD413 / ADP1).